A 247-amino-acid polypeptide reads, in one-letter code: MSIDFALPQDAAIPAAAEERVNRTPLAVSVRGLQRRYGARVVIDALDLDIREGEFVTLLGESGCGKTTLLRALAGLDQPDAGQIRAPERPSVVFQEHRLLPWATLWENVVLGHETTIGRVGATRALAEVGLSGREDDWPRNLSGGQAQRVALARGLVRDPALLLLDEPFAALDALTRIKMHGLVKELVARHHPGVLLVTHDVDEALTLADRILVMRSGRIAASFHPKNHTPQALRPILLEELGVQSH.

Residues 28–242 enclose the ABC transporter domain; sequence VSVRGLQRRY…ALRPILLEEL (215 aa). 60-67 contacts ATP; it reads GESGCGKT.

This sequence belongs to the ABC transporter superfamily. Aliphatic sulfonates importer (TC 3.A.1.17.2) family. In terms of assembly, the complex is composed of two ATP-binding proteins (SsuB), two transmembrane proteins (SsuC) and a solute-binding protein (SsuA).

Its subcellular location is the cell inner membrane. It carries out the reaction ATP + H2O + aliphatic sulfonate-[sulfonate-binding protein]Side 1 = ADP + phosphate + aliphatic sulfonateSide 2 + [sulfonate-binding protein]Side 1.. Its function is as follows. Part of the ABC transporter complex SsuABC involved in aliphatic sulfonates import. Responsible for energy coupling to the transport system. The protein is Aliphatic sulfonates import ATP-binding protein SsuB 2 of Paraburkholderia xenovorans (strain LB400).